Reading from the N-terminus, the 225-residue chain is Cytidylate kinase (225 aa).

11–19 (GPAAAGKST) contacts ATP.

It belongs to the cytidylate kinase family. Type 1 subfamily.

It is found in the cytoplasm. It catalyses the reaction CMP + ATP = CDP + ADP. The enzyme catalyses dCMP + ATP = dCDP + ADP. The sequence is that of Cytidylate kinase from Anoxybacillus flavithermus (strain DSM 21510 / WK1).